An 829-amino-acid polypeptide reads, in one-letter code: Cadherin-3 (829 aa).

The signal sequence occupies residues 1–24 (MGLPRGPLASLLLLQVCWLQCAAS). Positions 25 to 107 (EPCRAVFREA…SKRILRRHKR (83 aa)) are excised as a propeptide. Cadherin domains lie at 108 to 215 (DWVV…KPKF), 216 to 328 (TQDT…APMF), 329 to 440 (DPQK…APVF), 441 to 546 (VPPS…DHGP), and 547 to 650 (VPEP…CPGP). Residues 108–654 (DWVVAPISVP…ETCPGPWKGG (547 aa)) lie on the Extracellular side of the membrane. N200 carries an N-linked (GlcNAc...) asparagine glycan. N-linked (GlcNAc...) asparagine glycosylation occurs at N566. The chain crosses the membrane as a helical span at residues 655 to 677 (FILPVLGAVLALLFLLLVLLLLV). The Cytoplasmic portion of the chain corresponds to 678 to 829 (RKKRKIKEPL…ADMYGGGEDD (152 aa)).

In terms of assembly, interacts with CDCP1 and CTNNB1. As to expression, expressed in some normal epithelial tissues and in some carcinoma cell lines.

The protein localises to the cell membrane. Functionally, cadherins are calcium-dependent cell adhesion proteins. They preferentially interact with themselves in a homophilic manner in connecting cells; cadherins may thus contribute to the sorting of heterogeneous cell types. In Homo sapiens (Human), this protein is Cadherin-3 (CDH3).